The primary structure comprises 209 residues: Putative AgrB-like protein (209 aa).

Helical transmembrane passes span 49 to 71 (ILFL…AAFG), 82 to 102 (AKNS…GAYL), 105 to 125 (YLLF…LLLF), 149 to 169 (QAVL…DELI), and 173 to 193 (ISLS…KVLG).

It belongs to the AgrB family.

It is found in the cell membrane. In terms of biological role, may be involved in the proteolytic processing of a quorum sensing system signal molecule precursor. In Clostridium acetobutylicum (strain ATCC 824 / DSM 792 / JCM 1419 / IAM 19013 / LMG 5710 / NBRC 13948 / NRRL B-527 / VKM B-1787 / 2291 / W), this protein is Putative AgrB-like protein.